Here is a 775-residue protein sequence, read N- to C-terminus: Semaphorin-3E (775 aa).

The N-terminal stretch at 1-25 is a signal peptide; sequence MAPAGHILTLLLWGHLLELWTPGHS. In terms of domain architecture, Sema spans 32 to 516; that stretch reads RLRLSHKELL…SASAVAQVRF (485 aa). Asparagine 44 is a glycosylation site (N-linked (GlcNAc...) asparagine). Cysteine 105 and cysteine 115 form a disulfide bridge. Asparagine 126 carries N-linked (GlcNAc...) asparagine glycosylation. Residues cysteine 133 and cysteine 142 are joined by a disulfide bond. Residues asparagine 175 and asparagine 330 are each glycosylated (N-linked (GlcNAc...) asparagine). Disulfide bonds link cysteine 270/cysteine 382, cysteine 294/cysteine 342, and cysteine 519/cysteine 537. One can recognise an Ig-like C2-type domain in the interval 581–669; it reads ALDRTEERLA…NFVHTVRKIT (89 aa). N-linked (GlcNAc...) asparagine glycosylation is present at asparagine 596. An intrachain disulfide couples cysteine 654 to cysteine 729.

Belongs to the semaphorin family. Interacts with PLXND1. In terms of tissue distribution, detected in neurons in the thalamus. Detected in embryonic vasculature. Developing lungs, developing skeletal elements and ventral horns of the developing neural tube. Correlates positively with tumor progression.

It is found in the secreted. Functionally, plays an important role in signaling via the cell surface receptor PLXND1. Mediates reorganization of the actin cytoskeleton, leading to the retraction of cell projections. Promotes focal adhesion disassembly and inhibits adhesion of endothelial cells to the extracellular matrix. Regulates angiogenesis, both during embryogenesis and after birth. Can down-regulate sprouting angiogenesis. Required for normal vascular patterning during embryogenesis. Plays an important role in ensuring the specificity of synapse formation. The sequence is that of Semaphorin-3E (Sema3e) from Mus musculus (Mouse).